The following is a 117-amino-acid chain: Ribonuclease P protein component (117 aa).

Belongs to the RnpA family. In terms of assembly, consists of a catalytic RNA component (M1 or rnpB) and a protein subunit.

It catalyses the reaction Endonucleolytic cleavage of RNA, removing 5'-extranucleotides from tRNA precursor.. In terms of biological role, RNaseP catalyzes the removal of the 5'-leader sequence from pre-tRNA to produce the mature 5'-terminus. It can also cleave other RNA substrates such as 4.5S RNA. The protein component plays an auxiliary but essential role in vivo by binding to the 5'-leader sequence and broadening the substrate specificity of the ribozyme. This chain is Ribonuclease P protein component, found in Thermotoga maritima (strain ATCC 43589 / DSM 3109 / JCM 10099 / NBRC 100826 / MSB8).